The chain runs to 424 residues: Serine--tRNA ligase (424 aa).

231–233 (TAE) contacts L-serine. 262-264 (RSE) provides a ligand contact to ATP. E285 is an L-serine binding site. 349 to 352 (EISS) is an ATP binding site. S385 serves as a coordination point for L-serine.

This sequence belongs to the class-II aminoacyl-tRNA synthetase family. Type-1 seryl-tRNA synthetase subfamily. As to quaternary structure, homodimer. The tRNA molecule binds across the dimer.

The protein localises to the cytoplasm. The enzyme catalyses tRNA(Ser) + L-serine + ATP = L-seryl-tRNA(Ser) + AMP + diphosphate + H(+). The catalysed reaction is tRNA(Sec) + L-serine + ATP = L-seryl-tRNA(Sec) + AMP + diphosphate + H(+). It participates in aminoacyl-tRNA biosynthesis; selenocysteinyl-tRNA(Sec) biosynthesis; L-seryl-tRNA(Sec) from L-serine and tRNA(Sec): step 1/1. Functionally, catalyzes the attachment of serine to tRNA(Ser). Is also able to aminoacylate tRNA(Sec) with serine, to form the misacylated tRNA L-seryl-tRNA(Sec), which will be further converted into selenocysteinyl-tRNA(Sec). The sequence is that of Serine--tRNA ligase from Bacillus cytotoxicus (strain DSM 22905 / CIP 110041 / 391-98 / NVH 391-98).